The following is a 1373-amino-acid chain: DNA-directed RNA polymerase subunit beta'' (1373 aa).

Zn(2+) contacts are provided by Cys-220, Cys-291, Cys-298, and Cys-301.

It belongs to the RNA polymerase beta' chain family. RpoC2 subfamily. In terms of assembly, in plastids the minimal PEP RNA polymerase catalytic core is composed of four subunits: alpha, beta, beta', and beta''. When a (nuclear-encoded) sigma factor is associated with the core the holoenzyme is formed, which can initiate transcription. Requires Zn(2+) as cofactor.

It is found in the plastid. The protein resides in the chloroplast. It carries out the reaction RNA(n) + a ribonucleoside 5'-triphosphate = RNA(n+1) + diphosphate. DNA-dependent RNA polymerase catalyzes the transcription of DNA into RNA using the four ribonucleoside triphosphates as substrates. This is DNA-directed RNA polymerase subunit beta'' from Silene latifolia (White campion).